We begin with the raw amino-acid sequence, 536 residues long: Probable serine/threonine-protein kinase DDB_G0268550 (536 aa).

The Protein kinase domain occupies 14-305; that stretch reads EIIEKNYRKG…IDVLEIHPFL (292 aa). ATP is bound by residues 20–28 and Lys51; that span reads YRKGGFSKI. Asp147 acts as the Proton acceptor in catalysis. The interval 161–192 is disordered; that stretch reads DNNNNNNNNNNNNNNNNNNNSNINDDNNNSNS.

The protein belongs to the protein kinase superfamily. Ser/Thr protein kinase family. Requires Mg(2+) as cofactor.

The enzyme catalyses L-seryl-[protein] + ATP = O-phospho-L-seryl-[protein] + ADP + H(+). It carries out the reaction L-threonyl-[protein] + ATP = O-phospho-L-threonyl-[protein] + ADP + H(+). The polypeptide is Probable serine/threonine-protein kinase DDB_G0268550 (Dictyostelium discoideum (Social amoeba)).